The sequence spans 313 residues: MITLTQKDLLKAGVHLGHLSRKWNPSMAPFIFMESRGIHIIDLNKTLSQLQEAADTLQAVARSGKKILFVATKKQAKELVAQTAKSLNMPYMTERWLGGTLTNFITIRRLIKKLTSMERMMKSATYKNMAKKEQLMIARDKDKLERVLGGVLDLTKLPGALVVVDIMKESIAVQEARKLGIPIIALADTNVDPDLVDYPIPSNDDATPAIELIVRTLGEAINEGLSMRQEDKAAEAQDKDAQDTEDNKGARPRGAEKVAYSDADSEEDNAYGIAVKASKNKTAEPVERFKKSRTPVKGSRPIGVSKAGDKPKK.

Over residues 228–256 (RQEDKAAEAQDKDAQDTEDNKGARPRGAE) the composition is skewed to basic and acidic residues. Residues 228 to 313 (RQEDKAAEAQ…VSKAGDKPKK (86 aa)) are disordered.

Belongs to the universal ribosomal protein uS2 family.

This Amoebophilus asiaticus (strain 5a2) protein is Small ribosomal subunit protein uS2.